The following is a 404-amino-acid chain: Sulfate adenylyltransferase (404 aa).

This sequence belongs to the sulfate adenylyltransferase family.

It carries out the reaction sulfate + ATP + H(+) = adenosine 5'-phosphosulfate + diphosphate. It participates in sulfur metabolism; hydrogen sulfide biosynthesis; sulfite from sulfate: step 1/3. The sequence is that of Sulfate adenylyltransferase from Chlorobium chlorochromatii (strain CaD3).